We begin with the raw amino-acid sequence, 101 residues long: MAGQKIRIRLKAYDHEAIDASARKIVETVVRTGASVVGPVPLPTEKNVYCVIRSPHKYKDSREHFEMRTHKRLIDILDPTPKTVDALMRIDLPASVDVNIQ.

The protein belongs to the universal ribosomal protein uS10 family. In terms of assembly, part of the 30S ribosomal subunit.

In terms of biological role, involved in the binding of tRNA to the ribosomes. In Mycobacterium avium (strain 104), this protein is Small ribosomal subunit protein uS10.